The sequence spans 229 residues: UPF0173 metal-dependent hydrolase SAB1566c (229 aa).

The protein belongs to the UPF0173 family.

This chain is UPF0173 metal-dependent hydrolase SAB1566c, found in Staphylococcus aureus (strain bovine RF122 / ET3-1).